Consider the following 338-residue polypeptide: D-erythrose-4-phosphate dehydrogenase (338 aa).

12–13 is an NAD(+) binding site; it reads RI. Substrate-binding positions include 154-156, Arg200, 213-214, and Arg236; these read SCT and TK. The active-site Nucleophile is the Cys155. Asn318 lines the NAD(+) pocket.

This sequence belongs to the glyceraldehyde-3-phosphate dehydrogenase family. Epd subfamily. Homotetramer.

Its subcellular location is the cytoplasm. The enzyme catalyses D-erythrose 4-phosphate + NAD(+) + H2O = 4-phospho-D-erythronate + NADH + 2 H(+). The protein operates within cofactor biosynthesis; pyridoxine 5'-phosphate biosynthesis; pyridoxine 5'-phosphate from D-erythrose 4-phosphate: step 1/5. In terms of biological role, catalyzes the NAD-dependent conversion of D-erythrose 4-phosphate to 4-phosphoerythronate. In Pectobacterium atrosepticum (strain SCRI 1043 / ATCC BAA-672) (Erwinia carotovora subsp. atroseptica), this protein is D-erythrose-4-phosphate dehydrogenase.